We begin with the raw amino-acid sequence, 391 residues long: MRIPCLLRPLLGWFFGLCILFSALFGNYIITLFLGLPILGRHKQWRNLMDRAISYWMTIPMGLLEFLMGVRIRVSGDEIEFGSPAMIVMNHRTRLDWMYMWCALYQINPWLITSNKISLKAQLKKLPGAGFGMAAAQFVFLERNAEVDKRSFDDAIDYFKNIDKKYQILLFPEGTDKSEWTTLKSREFAKKNGLRHLDYVLYPRTTGFLHLLNKMREQEYVEYIYDITIAYPYNIVQSEIDLVLKGASPREVHFHIRKIPISQVPLNEQDASRWLTDRWTIKEQLLHDFYSEEQPINRQFPVERGDGVWRSWKEPRRHFYVKLTSLMFWTLVISFCSYHIFFVRTLQLGFLYFFVISFYLSWRYGGIDKYIIFKWQESRKSLQKSPSSSSI.

Transmembrane regions (helical) follow at residues 10–30 (LLGW…NYII), 52–72 (AISY…GVRI), 97–119 (WMYM…KISL), 323–343 (LTSL…IFFV), and 347–367 (QLGF…YGGI).

This sequence belongs to the 1-acyl-sn-glycerol-3-phosphate acyltransferase family. Expressed in seam cells, vulval epithelial cells and the major epithelial syncytium hyp7, and in several head neurons including AIY interneurons.

The protein localises to the endoplasmic reticulum membrane. The enzyme catalyses a 2-acyl-sn-glycero-3-phospho-D-myo-inositol + an acyl-CoA = a 1,2-diacyl-sn-glycero-3-phospho-(1D-myo-inositol) + CoA. It carries out the reaction a 2-acyl-sn-glycero-3-phospho-D-myo-inositol + octadecanoyl-CoA = 1-octadecanoyl-2-acyl-sn-glycero-3-phospho-1D-myo-inositol + CoA. The protein operates within phospholipid metabolism; phosphatidylinositol metabolism. In terms of biological role, acyltransferase required for the fatty acid remodeling of phosphatidylinositol (1,2-diacyl-sn-glycero-3-phosphoinositol or PI). Mediates the conversion of lysophosphatidylinositol (2-acylglycerophosphatidylinositol or LPI) into PI (LPIAT activity). Has preference for saturated and mono-unsaturated fatty acids as acyl donors and sn-2-acyl lysoPI (2-acyl-sn-glycero-3-phospho-D-myo-inositol) as acyl acceptor. Contributes to the asymmetric cell division of epithelial cells. Asymmetric cell division is the fundamental mechanism by which multicellular organisms generate cell diversity. This Caenorhabditis elegans protein is Lysophosphatidylinositol acyltransferase 10.